The following is a 263-amino-acid chain: Endolytic peptidoglycan transglycosylase RlpA (263 aa).

An N-terminal signal peptide occupies residues 1–16 (MNRIYLYLLIVLILAG). A lipid anchor (N-palmitoyl cysteine) is attached at Cys17. Cys17 carries S-diacylglycerol cysteine lipidation. An SPOR domain is found at 182-257 (KNNALEYVIQ…AGYDSAFIKT (76 aa)).

This sequence belongs to the RlpA family.

Its subcellular location is the cell membrane. Its function is as follows. Lytic transglycosylase with a strong preference for naked glycan strands that lack stem peptides. The polypeptide is Endolytic peptidoglycan transglycosylase RlpA (Vibrio cholerae serotype O1 (strain ATCC 39315 / El Tor Inaba N16961)).